The sequence spans 301 residues: Nucleotide-binding protein Helmi_06460 (301 aa).

Residue 17 to 24 (GLSGAGKS) participates in ATP binding. Residue 68 to 71 (DIRG) participates in GTP binding.

The protein belongs to the RapZ-like family.

Functionally, displays ATPase and GTPase activities. The chain is Nucleotide-binding protein Helmi_06460 from Heliobacterium modesticaldum (strain ATCC 51547 / Ice1).